We begin with the raw amino-acid sequence, 462 residues long: Argininosuccinate lyase 2 (462 aa).

This sequence belongs to the lyase 1 family. Argininosuccinate lyase subfamily.

It localises to the cytoplasm. It carries out the reaction 2-(N(omega)-L-arginino)succinate = fumarate + L-arginine. The protein operates within amino-acid biosynthesis; L-arginine biosynthesis; L-arginine from L-ornithine and carbamoyl phosphate: step 3/3. In Shouchella clausii (strain KSM-K16) (Alkalihalobacillus clausii), this protein is Argininosuccinate lyase 2.